We begin with the raw amino-acid sequence, 501 residues long: Lysine--tRNA ligase (501 aa).

2 residues coordinate Mg(2+): Glu-402 and Glu-409.

This sequence belongs to the class-II aminoacyl-tRNA synthetase family. As to quaternary structure, homodimer. Mg(2+) serves as cofactor.

It is found in the cytoplasm. It catalyses the reaction tRNA(Lys) + L-lysine + ATP = L-lysyl-tRNA(Lys) + AMP + diphosphate. The chain is Lysine--tRNA ligase from Helicobacter pylori (strain P12).